The sequence spans 360 residues: Histidinol-phosphate aminotransferase (360 aa).

Lys-221 carries the N6-(pyridoxal phosphate)lysine modification.

It belongs to the class-II pyridoxal-phosphate-dependent aminotransferase family. Histidinol-phosphate aminotransferase subfamily. Homodimer. Pyridoxal 5'-phosphate is required as a cofactor.

The enzyme catalyses L-histidinol phosphate + 2-oxoglutarate = 3-(imidazol-4-yl)-2-oxopropyl phosphate + L-glutamate. It functions in the pathway amino-acid biosynthesis; L-histidine biosynthesis; L-histidine from 5-phospho-alpha-D-ribose 1-diphosphate: step 7/9. The chain is Histidinol-phosphate aminotransferase from Desulfitobacterium hafniense (strain Y51).